We begin with the raw amino-acid sequence, 596 residues long: DNA polymerase kappa (596 aa).

One can recognise a UmuC domain in the interval 85–320 (CVCIDMDAYF…LPIRKVGGIG (236 aa)). The Mg(2+) site is built by Asp89 and Asp180. Glu181 is a catalytic residue. The UBZ4-type zinc-finger motif lies at 516 to 545 (TRPCPICGTDVENRLDVMNCHVDECILKVQ). Residues Cys519, Cys522, His536, and Cys540 each coordinate Zn(2+). Positions 559–584 (NKSTQKPERPSTKKRKLQEKRPKAKK) are disordered. The span at 570–584 (TKKRKLQEKRPKAKK) shows a compositional bias: basic residues.

It belongs to the DNA polymerase type-Y family. Requires Mg(2+) as cofactor. Mn(2+) is required as a cofactor.

The protein localises to the nucleus. It catalyses the reaction DNA(n) + a 2'-deoxyribonucleoside 5'-triphosphate = DNA(n+1) + diphosphate. In terms of biological role, DNA polymerase specifically involved in DNA repair. Plays an important role in translesion synthesis, where the normal high-fidelity DNA polymerases cannot proceed and DNA synthesis stalls. Depending on the context, it inserts the correct base, but causes frequent base transitions, transversions and frameshifts. Lacks 3'-5' proofreading exonuclease activity. Forms a Schiff base with 5'-deoxyribose phosphate at abasic sites, but does not have lyase activity. This Caenorhabditis elegans protein is DNA polymerase kappa (polk-1).